Reading from the N-terminus, the 247-residue chain is Carboxy-S-adenosyl-L-methionine synthase (247 aa).

S-adenosyl-L-methionine is bound by residues Tyr40, 65 to 67, 90 to 91, 122 to 123, Asn137, and Arg204; these read GAS, DN, and DI.

It belongs to the class I-like SAM-binding methyltransferase superfamily. Cx-SAM synthase family. Homodimer.

The catalysed reaction is prephenate + S-adenosyl-L-methionine = carboxy-S-adenosyl-L-methionine + 3-phenylpyruvate + H2O. In terms of biological role, catalyzes the conversion of S-adenosyl-L-methionine (SAM) to carboxy-S-adenosyl-L-methionine (Cx-SAM). The polypeptide is Carboxy-S-adenosyl-L-methionine synthase (Pseudomonas entomophila (strain L48)).